We begin with the raw amino-acid sequence, 190 residues long: RNA pyrophosphohydrolase (190 aa).

The 144-residue stretch at 6–149 (GYRPNVGIVL…KRGVYARALC (144 aa)) folds into the Nudix hydrolase domain. Positions 38 to 59 (GGMHSDETPVEAMYRELNEETG) match the Nudix box motif.

This sequence belongs to the Nudix hydrolase family. RppH subfamily. A divalent metal cation serves as cofactor.

In terms of biological role, accelerates the degradation of transcripts by removing pyrophosphate from the 5'-end of triphosphorylated RNA, leading to a more labile monophosphorylated state that can stimulate subsequent ribonuclease cleavage. In Xylella fastidiosa (strain 9a5c), this protein is RNA pyrophosphohydrolase.